The following is an 84-amino-acid chain: Small ribosomal subunit protein bS20 (84 aa).

This sequence belongs to the bacterial ribosomal protein bS20 family.

Functionally, binds directly to 16S ribosomal RNA. In Limosilactobacillus fermentum (strain NBRC 3956 / LMG 18251) (Lactobacillus fermentum), this protein is Small ribosomal subunit protein bS20.